Reading from the N-terminus, the 425-residue chain is Enolase (425 aa).

Position 163 (Gln-163) interacts with (2R)-2-phosphoglycerate. The Proton donor role is filled by Glu-205. Mg(2+) is bound by residues Asp-242, Glu-285, and Asp-312. (2R)-2-phosphoglycerate-binding residues include Lys-337, Arg-366, Ser-367, and Lys-388. Lys-337 serves as the catalytic Proton acceptor.

This sequence belongs to the enolase family. The cofactor is Mg(2+).

The protein resides in the cytoplasm. The protein localises to the secreted. Its subcellular location is the cell surface. The enzyme catalyses (2R)-2-phosphoglycerate = phosphoenolpyruvate + H2O. It functions in the pathway carbohydrate degradation; glycolysis; pyruvate from D-glyceraldehyde 3-phosphate: step 4/5. Functionally, catalyzes the reversible conversion of 2-phosphoglycerate (2-PG) into phosphoenolpyruvate (PEP). It is essential for the degradation of carbohydrates via glycolysis. The protein is Enolase of Rhodospirillum rubrum (strain ATCC 11170 / ATH 1.1.1 / DSM 467 / LMG 4362 / NCIMB 8255 / S1).